The primary structure comprises 498 residues: Phosphoethanolamine N-methyltransferase 1 (498 aa).

Gly-68, Arg-73, Asp-89, Asp-115, Val-116, and Asn-134 together coordinate S-adenosyl-L-homocysteine. Ser-167, Ser-172, Gly-173, Arg-177, and Tyr-184 together coordinate phosphocholine. N-methylethanolamine phosphate-binding positions include 253 to 254 and Tyr-262; that span reads QY. Tyr-262 is a binding site for phosphocholine. Residues Val-271, Ser-272, Gly-298, Asp-320, Asp-346, Cys-347, and Arg-363 each coordinate S-adenosyl-L-homocysteine. Phosphocholine contacts are provided by Tyr-394, Tyr-408, Arg-412, Tyr-414, and Lys-480. N-methylethanolamine phosphate is bound by residues Tyr-394, Tyr-408, 412–414, and Lys-480; that span reads RGY.

Belongs to the class I-like SAM-binding methyltransferase superfamily. PEAMT family.

The enzyme catalyses phosphoethanolamine + S-adenosyl-L-methionine = N-methylethanolamine phosphate + S-adenosyl-L-homocysteine + H(+). It catalyses the reaction N-methylethanolamine phosphate + S-adenosyl-L-methionine = N,N-dimethylethanolamine phosphate + S-adenosyl-L-homocysteine + H(+). The catalysed reaction is N,N-dimethylethanolamine phosphate + S-adenosyl-L-methionine = phosphocholine + S-adenosyl-L-homocysteine + H(+). The protein operates within phospholipid metabolism; phosphatidylcholine biosynthesis; phosphocholine from phosphoethanolamine: step 1/1. Inhibited by phosphatidic acid. Functionally, involved in phosphocholine biosynthesis. Catalyzes the N-methylation of phosphoethanolamine, phosphomonomethylethanolamine and phosphodimethylethanolamine, the three methylation steps required to convert phosphoethanolamine to phosphocholine (PC). This is Phosphoethanolamine N-methyltransferase 1 from Triticum aestivum (Wheat).